Here is a 511-residue protein sequence, read N- to C-terminus: Phosphoenolpyruvate carboxylase (511 aa).

Belongs to the PEPCase type 2 family. Homotetramer. Mg(2+) serves as cofactor.

It carries out the reaction oxaloacetate + phosphate = phosphoenolpyruvate + hydrogencarbonate. Its function is as follows. Catalyzes the irreversible beta-carboxylation of phosphoenolpyruvate (PEP) to form oxaloacetate (OAA), a four-carbon dicarboxylic acid source for the tricarboxylic acid cycle. The chain is Phosphoenolpyruvate carboxylase from Saccharolobus islandicus (strain M.16.27) (Sulfolobus islandicus).